Consider the following 540-residue polypeptide: Synaptotagmin-3 (540 aa).

A helical membrane pass occupies residues 9 to 29; sequence GIIGFVIGIPIGLILGFFVLI. In terms of domain architecture, SMP-LTD spans 67 to 249; the sequence is DYERVDWFNK…WPQVLEIPIL (183 aa). The phospholipid binding stretch occupies residues 227–509; the sequence is QETIKRQVSS…ELGHVDINLD (283 aa). C2 domains are found at residues 240-363 and 401-521; these read WPQV…EFNL and RKES…NQKY. Positions 277, 283, 333, 335, and 341 each coordinate Ca(2+).

Belongs to the synaptotagmin family. Requires Ca(2+) as cofactor.

It is found in the membrane. In terms of biological role, may be involved in membrane trafficking. The sequence is that of Synaptotagmin-3 (SYT3) from Arabidopsis thaliana (Mouse-ear cress).